Consider the following 642-residue polypeptide: MATDTQKETLGFQTEVKQLLHLMIHSLYSNKEIFLRELISNASDAVDKLRFESVANADLLAEDPNLRVRIEFDKDTNTVVIDDNGVGMSREEAITNLGTIAKSGTSAFLEQLSGDQKKDSQLIGQFGVGFYSAFIVADKVTVETRRAGVAADQAVRWVSDGSGEFTIENIEKDSRGTRIILHLKAGEKEFADNFRLRHLVTKYSDHISIPVEMEKPVYPEMDEEGNPKPVDENKAPEYEAVNSAKALWTRPRNEVTDEEYQEFYKHISHDYQEPLKWSHNKVEGKLEYSSLLYIPSKAPYDLWNRDMQRGLKLYVQRVFIMDEAEAFLPPYMRFVKGVVDSNDLSLNVSREILQNDHAVDSMRSALTKRVLDMLGKMAKNEPEDYQKFWDEFGNVIKEGPADDMGNKDKIAGLLRFSSTHTDAAAQTVSLADYIERMQEGQDKIYYIYAESHNTAKNSPHLEILRKKGFEVLLLSDRIDEWMMSSLQEFEGKSFQDVTKGKLDLADQENEEEKKEKEEKAEKMKPLLDRMKAVLNEKVAGVNSTDRLTNSPACLVVGEYDMGLQMRRLLEQAGQKLPESKPTLEVNPDHPIVAKMDSETDEERFADMAWLLFEQATLSEGGQLEDPATFVSRMNKLIVQLSK.

Residues methionine 1 to arginine 350 are a; substrate-binding. Residues glutamate 351–arginine 567 are b. A c region spans residues leucine 568 to lysine 642.

Belongs to the heat shock protein 90 family. As to quaternary structure, homodimer.

It localises to the cytoplasm. Functionally, molecular chaperone. Has ATPase activity. The sequence is that of Chaperone protein HtpG from Marinomonas sp. (strain MWYL1).